We begin with the raw amino-acid sequence, 130 residues long: Encapsulin nanocompartment cargo protein EncC (130 aa).

Residues E31, E61, and H64 each contribute to the Fe cation site. The Di-iron-binding motif signature appears at 61–64 (EREH). A disordered region spans residues 103-130 (EAVGKEGAAPSPADVTPEKRLTVGSLRR). Residues 123 to 130 (LTVGSLRR) form a probable targeting peptide region.

The protein belongs to the ferritin-like superfamily.

The protein localises to the encapsulin nanocompartment. Functionally, cargo protein of a type 1 encapsulin nanocompartment. May help nucleate Fe atoms in the interior of the encapsulin nanocompartment. Present in about 92 copies/encapsulin nanocompartment. This is Encapsulin nanocompartment cargo protein EncC from Myxococcus xanthus (strain DK1622).